A 440-amino-acid chain; its full sequence is Trigger factor (440 aa).

The 86-residue stretch at 162–247 folds into the PPIase FKBP-type domain; it reads GDRVTFDFTG…LKKIEKFQLP (86 aa).

The protein belongs to the FKBP-type PPIase family. Tig subfamily.

It is found in the cytoplasm. The catalysed reaction is [protein]-peptidylproline (omega=180) = [protein]-peptidylproline (omega=0). Involved in protein export. Acts as a chaperone by maintaining the newly synthesized protein in an open conformation. Functions as a peptidyl-prolyl cis-trans isomerase. The polypeptide is Trigger factor (Hamiltonella defensa subsp. Acyrthosiphon pisum (strain 5AT)).